A 274-amino-acid polypeptide reads, in one-letter code: Halorhodopsin (274 aa).

Positions 1-21 are excised as a propeptide; the sequence is MSITSVPGVVDAGVLGAQSAA. Topologically, residues 22–25 are extracellular; it reads AVRE. A helical transmembrane segment spans residues 26–51; it reads NALLSSSLWVNVALAGIAILVFVYMG. At 52 to 57 the chain is on the cytoplasmic side; the sequence is RTIRPG. The helical transmembrane segment at 58-81 threads the bilayer; sequence RPRLIWGATLMIPLVSISSYLGLL. The Extracellular segment spans residues 82–105; that stretch reads SGLTVGMIEMPAGHALAGEMVRSQ. The chloride site is built by glutamine 105, threonine 111, and serine 115. A helical membrane pass occupies residues 106–127; the sequence is WGRYLTWALSTPMILLALGLLA. At 128 to 130 the chain is on the cytoplasmic side; sequence DVD. The helical transmembrane segment at 131 to 154 threads the bilayer; that stretch reads LGSLFTVIAADIGMCVTGLAAAMT. Residues 155–157 are Extracellular-facing; that stretch reads TSA. A helical transmembrane segment spans residues 158–180; sequence LLFRWAFYAISCAFFVVVLSALV. Residues 181–192 lie on the Cytoplasmic side of the membrane; sequence TDWAASASSAGT. The helical transmembrane segment at 193-216 threads the bilayer; sequence AEIFDTLRVLTVVLWLGYPIVWAV. The Extracellular segment spans residues 217–226; sequence GVEGLALVQS. Residues 227–255 traverse the membrane as a helical segment; that stretch reads VGVTSWAYSVLDVFAKYVFAFILLRWVAN. Position 242 is an N6-(retinylidene)lysine (lysine 242). Residues 256–274 are Cytoplasmic-facing; that stretch reads NERTVAVAGQTLGTMSSDD.

Belongs to the archaeal/bacterial/fungal opsin family. Homotrimer.

The protein resides in the cell membrane. Its function is as follows. Light-driven chloride pump. This Halobacterium salinarum (strain ATCC 29341 / DSM 671 / R1) protein is Halorhodopsin (hop).